The primary structure comprises 419 residues: Interferon regulatory factor 3 (419 aa).

Phosphothreonine is present on threonine 3. Positions 5-111 (KPRILPWLIS…DPHKIYEFVT (107 aa)) form a DNA-binding region, IRF tryptophan pentad repeat. A Phosphoserine modification is found at serine 14. Residue threonine 75 is modified to Phosphothreonine. 2 positions are modified to phosphoserine: serine 97 and serine 123. The interval 118–137 (PEPDTSLDLSGRYSTSDTHE) is disordered. The interval 140–419 (LDKLLSGMDL…LRDLVEDMDF (280 aa)) is mediates interaction with ZDHHC11. Lysine 191 participates in a covalent cross-link: Glycyl lysine isopeptide (Lys-Gly) (interchain with G-Cter in ISG15). The interaction with HERC5 stretch occupies residues 198–358 (DEWEFQVTVF…SWPQDEPWVK (161 aa)). A phosphothreonine mark is found at threonine 235 and threonine 251. A disulfide bridge connects residues cysteine 265 and cysteine 287. Glycyl lysine isopeptide (Lys-Gly) (interchain with G-Cter in ISG15) cross-links involve residues lysine 358 and lysine 364. N6-acetyllysine is present on lysine 364. Serine 383 is modified (phosphoserine). A Diphosphoserine modification is found at serine 384. At serine 384 the chain carries Phosphoserine; by TBK1. Serine 394 bears the Phosphoserine; by IKKE mark. Residue serine 396 is modified to Phosphoserine. Threonine 402 is modified (phosphothreonine).

It belongs to the IRF family. In terms of assembly, monomer. Homodimer; phosphorylation-induced. Interacts (when phosphorylated) with CREBBP. Interacts with MAVS (via phosphorylated pLxIS motif). Interacts with TICAM1 (via phosphorylated pLxIS motif). Interacts with STING1 (via phosphorylated pLxIS motif). Interacts with IKBKE and TBK1. Interacts with TICAM2. Interacts with RBCK1. Interacts with HERC5. Interacts with DDX3X; the interaction allows the phosphorylation and activation of IRF3 by IKBKE. Interacts with TRIM21 and ULK1, in the presence of TRIM21; this interaction leads to IRF3 degradation by autophagy. Interacts with RIOK3; RIOK3 probably mediates the interaction of TBK1 with IRF3. Interacts with ILRUN; the interaction inhibits IRF3 binding to its DNA consensus sequence. Interacts with LYAR; this interaction impairs IRF3 DNA-binding activity. Interacts with TRAF3. Interacts with ZDHHC11; ZDHHC11 recruits IRF3 to STING1 upon DNA virus infection and thereby promotes IRF3 activation. Interacts with HSP90AA1; the interaction mediates IRF3 association with TOMM70. Interacts with BCL2; the interaction decreases upon Sendai virus infection. Interacts with BAX; the interaction is direct, increases upon virus infection and mediates the formation of the apoptosis complex TOMM70:HSP90AA1:IRF3:BAX. Interacts with DDX56. Interacts with NBR1. (Microbial infection) Interacts with Porcine epidemic diarrhea virus E protein; this interaction prevents IRF3 translocation to the nucleus and thereby prevents type I interferon production. As to quaternary structure, (Microbial infection) Interacts with African swine fever virus (ASFV) P14.5/E120R; this interaction interferes with the recruitment of IRF3 to TBK1, which in turn suppresses IRF3 phosphorylation, decreasing interferon production via the cGAS/STING pathway. In terms of assembly, (Microbial infection) Interacts with African swine fever virus (ASFV) MGF360-14L; this interaction mediates degradation of IRF3 through TRIM21 and ubiquitin-meditated proteolysis. (Microbial infection) Interacts with African swine fever virus (ASFV) E301R; this interaction inhibits nuclear translocation of IRF3 to the nucleus. As to quaternary structure, (Microbial infection) Interacts with African swine fever virus (ASFV) minor capsid protein M1249L; this interaction mediates IRF3 degradation. Post-translationally, constitutively phosphorylated on many Ser/Thr residues. Activated following phosphorylation by TBK1 and IKBKE. Innate adapter proteins, such as MAVS, STING1 or TICAM1, are first activated by viral RNA, cytosolic DNA, and bacterial lipopolysaccharide (LPS), respectively, leading to activation of the kinases TBK1 and IKBKE. These kinases then phosphorylate the adapter proteins on the pLxIS motif, leading to recruitment of IRF3, thereby licensing IRF3 for phosphorylation by TBK1. Phosphorylation at Ser-384 is followed by pyrophosphorylation at the same residue, promoting phosphorylation at Ser-394. Phosphorylated IRF3 dissociates from the adapter proteins, dimerizes, and then enters the nucleus to induce IFNs. In terms of processing, pyrophosphorylated by UAP1 following phosphorylation at Ser-384 by TBK1. Pyrophosphorylation promotes subsequent phosphorylation at Ser-394, leading to homodimerization of IRF3. Acetylation at Lys-364 by KAT8 inhibits recruimtent to promoters and transcription factor activity. Acetylation by KAT8 is promoted by phosphorylation at Ser-394. Post-translationally, ubiquitinated; ubiquitination involves RBCK1 leading to proteasomal degradation. Polyubiquitinated; ubiquitination involves TRIM21 leading to proteasomal degradation. Ubiquitinated by UBE3C, leading to its degradation. Deubiquitinated by USP5 on both 'Lys-48'-linked unanchored and 'Lys-63'-linked anchored polyubiquitin, leading to inhibition of antiviral innate immunity. In terms of processing, ISGylated by HERC5 resulting in sustained IRF3 activation and in the inhibition of IRF3 ubiquitination by disrupting PIN1 binding. The phosphorylation state of IRF3 does not alter ISGylation. (Microbial infection) Phosphorylated by pseudorabies virus protein kinase UL13; leading to decreased IRF3 binding to the IRF3-responsive promoters and downstream ISG expression. Post-translationally, proteolytically cleaved by apoptotic caspases during apoptosis, leading to its inactivation. Cleavage by CASP3 during virus-induced apoptosis inactivates it, preventing cytokine overproduction.

It localises to the cytoplasm. The protein localises to the nucleus. The protein resides in the mitochondrion. With respect to regulation, in the absence of viral infection, maintained as a monomer in an autoinhibited state. Phosphorylation by TBK1 and IKBKE disrupts this autoinhibition leading to the liberation of the DNA-binding and dimerization activities and its nuclear localization where it can activate type I IFN and ISG genes. Phosphorylation and activation follow the following steps: innate adapter proteins, such as MAVS, STING1 or TICAM1, are first activated by viral RNA, cytosolic DNA and bacterial lipopolysaccharide (LPS), respectively, leading to activation of the kinases TBK1 and IKBKE. These kinases then phosphorylate the adapter proteins on their pLxIS motif, leading to recruitment of IRF3, thereby licensing IRF3 for phosphorylation by TBK1. Phosphorylated IRF3 dissociates from the adapter proteins, dimerizes, and then enters the nucleus to induce IFNs. Its function is as follows. Key transcriptional regulator of type I interferon (IFN)-dependent immune responses which plays a critical role in the innate immune response against DNA and RNA viruses. Regulates the transcription of type I IFN genes (IFN-alpha and IFN-beta) and IFN-stimulated genes (ISG) by binding to an interferon-stimulated response element (ISRE) in their promoters. Acts as a more potent activator of the IFN-beta (IFNB) gene than the IFN-alpha (IFNA) gene and plays a critical role in both the early and late phases of the IFNA/B gene induction. Found in an inactive form in the cytoplasm of uninfected cells and following viral infection, double-stranded RNA (dsRNA), or toll-like receptor (TLR) signaling, is phosphorylated by IKBKE and TBK1 kinases. This induces a conformational change, leading to its dimerization and nuclear localization and association with CREB binding protein (CREBBP) to form dsRNA-activated factor 1 (DRAF1), a complex which activates the transcription of the type I IFN and ISG genes. Can activate distinct gene expression programs in macrophages and can induce significant apoptosis in primary macrophages. The polypeptide is Interferon regulatory factor 3 (IRF3) (Sus scrofa (Pig)).